A 72-amino-acid polypeptide reads, in one-letter code: Large ribosomal subunit protein bL31 (72 aa).

The Zn(2+) site is built by Cys16, Cys18, Cys38, and Cys41.

The protein belongs to the bacterial ribosomal protein bL31 family. Type A subfamily. As to quaternary structure, part of the 50S ribosomal subunit. Requires Zn(2+) as cofactor.

Its function is as follows. Binds the 23S rRNA. This is Large ribosomal subunit protein bL31 from Francisella tularensis subsp. holarctica (strain LVS).